The sequence spans 505 residues: ATP synthase subunit alpha (505 aa).

Gly-170–Thr-177 is an ATP binding site.

The protein belongs to the ATPase alpha/beta chains family. As to quaternary structure, F-type ATPases have 2 components, CF(1) - the catalytic core - and CF(0) - the membrane proton channel. CF(1) has five subunits: alpha(3), beta(3), gamma(1), delta(1), epsilon(1). CF(0) has four main subunits: a(1), b(1), b'(1) and c(9-12).

It is found in the cellular thylakoid membrane. It carries out the reaction ATP + H2O + 4 H(+)(in) = ADP + phosphate + 5 H(+)(out). Functionally, produces ATP from ADP in the presence of a proton gradient across the membrane. The alpha chain is a regulatory subunit. The chain is ATP synthase subunit alpha from Synechococcus sp. (strain RCC307).